The sequence spans 264 residues: Thymidylate synthase (264 aa).

Arg-21 serves as a coordination point for dUMP. Residue His-51 participates in (6R)-5,10-methylene-5,6,7,8-tetrahydrofolate binding. 126–127 provides a ligand contact to dUMP; sequence RR. Cys-146 (nucleophile) is an active-site residue. Residues 166–169, Asn-177, and 207–209 contribute to the dUMP site; these read RSAD and HLY. A (6R)-5,10-methylene-5,6,7,8-tetrahydrofolate-binding site is contributed by Asp-169. Ser-263 serves as a coordination point for (6R)-5,10-methylene-5,6,7,8-tetrahydrofolate.

It belongs to the thymidylate synthase family. Bacterial-type ThyA subfamily. Homodimer.

The protein resides in the cytoplasm. It carries out the reaction dUMP + (6R)-5,10-methylene-5,6,7,8-tetrahydrofolate = 7,8-dihydrofolate + dTMP. It functions in the pathway pyrimidine metabolism; dTTP biosynthesis. Its function is as follows. Catalyzes the reductive methylation of 2'-deoxyuridine-5'-monophosphate (dUMP) to 2'-deoxythymidine-5'-monophosphate (dTMP) while utilizing 5,10-methylenetetrahydrofolate (mTHF) as the methyl donor and reductant in the reaction, yielding dihydrofolate (DHF) as a by-product. This enzymatic reaction provides an intracellular de novo source of dTMP, an essential precursor for DNA biosynthesis. This chain is Thymidylate synthase, found in Neisseria meningitidis serogroup C / serotype 2a (strain ATCC 700532 / DSM 15464 / FAM18).